Consider the following 188-residue polypeptide: MNLKDKILGVAKELFIKNGYNATTTGEIVKLSESSKGNLYYHFKTKENLFLEILNIEESKWQEQWKKEQIKCKTNREKFYLYNELSLTTEYYYPLQNAIIEFYTEYYKTNSINEKMNKLENKYIDAYHVIFKEGNLNGEWCINDVNAVSKIAANAVNGIVTFTHEQNINERIKLMNKFSQIFLNGLSK.

The 61-residue stretch at 1 to 61 (MNLKDKILGV…EILNIEESKW (61 aa)) folds into the HTH tetR-type domain. Positions 24-43 (TTGEIVKLSESSKGNLYYHF) form a DNA-binding region, H-T-H motif.

As to quaternary structure, homodimer. Binds cooperatively to DNA as a pair of dimers.

In terms of biological role, transcriptional repressor of qacA. Binds to IR1, an unusually long 28 bp operator, which is located downstream from the qacA promoter and overlaps its transcription start site. QacR is induced from its IR1 site by binding to one of many structurally dissimilar cationic lipophilic compounds, which are also substrates of QacA. In Staphylococcus aureus (strain Mu50 / ATCC 700699), this protein is HTH-type transcriptional regulator QacR (qacR).